A 1026-amino-acid polypeptide reads, in one-letter code: Tyrosine-protein phosphatase 1 (1026 aa).

An FERM domain is found at 29 to 315 (IRCTVTFLDS…EQHTFFRLKT (287 aa)). Disordered regions lie at residues 376-396 (SIDS…LPSS), 430-456 (PLTT…SLRQ), 489-515 (GIHA…KSAN), and 584-616 (SFAS…DQVV). A compositionally biased stretch (polar residues) spans 446 to 456 (DSESSAPSLRQ). Residues 600 to 609 (SPQSNKSSSP) show a composition bias toward low complexity. The 73-residue stretch at 617–689 (TIKMRPDRHG…DHVVQFIRSA (73 aa)) folds into the PDZ domain. The 259-residue stretch at 753–1011 (VVDHFEMLYR…TFVCESILRA (259 aa)) folds into the Tyrosine-protein phosphatase domain. Substrate-binding positions include Asp-920, 952–958 (CSAGIGR), and Gln-996. The active-site Phosphocysteine intermediate is the Cys-952.

Belongs to the protein-tyrosine phosphatase family. Non-receptor class subfamily.

It is found in the cytoplasm. The protein resides in the cytoskeleton. The enzyme catalyses O-phospho-L-tyrosyl-[protein] + H2O = L-tyrosyl-[protein] + phosphate. The chain is Tyrosine-protein phosphatase 1 (ptp-1) from Caenorhabditis elegans.